Reading from the N-terminus, the 389-residue chain is Chalcone synthase 3 (389 aa).

Cysteine 164 is a catalytic residue.

This sequence belongs to the thiolase-like superfamily. Chalcone/stilbene synthases family.

The catalysed reaction is (E)-4-coumaroyl-CoA + 3 malonyl-CoA + 3 H(+) = 2',4,4',6'-tetrahydroxychalcone + 3 CO2 + 4 CoA. It functions in the pathway secondary metabolite biosynthesis; flavonoid biosynthesis. In terms of biological role, the primary product of this enzyme is 4,2',4',6'-tetrahydroxychalcone (also termed naringenin-chalcone or chalcone) which can under specific conditions spontaneously isomerize into naringenin. The sequence is that of Chalcone synthase 3 (CHS3) from Pisum sativum (Garden pea).